The chain runs to 238 residues: MQAVLLVVALFGAALADPPKKIHLPTPKVKRVEKLAHQEHGVNVVQAVPITKTVVRTVNVPKTLIQEVPIHVYTDLVLKSPVPRRKVIDIKKTVLQPHIRHVPVDQPYVVHRKVPVIHTKIVRQPRPVPRIVNIPRLKVVQKQINRIIDVPRLVTRERVHRVIKPVPVVRTRVQHVDVDVPMRVVVPEPVVQDRHTQSVETVPVPHDVVRKVKVPKTFVLKDLIPVPEKAGRHYSSDK.

A signal peptide spans 1-16 (MQAVLLVVALFGAALA).

In terms of tissue distribution, prismatic layer of shell (at protein level). Expressed primarily in the mantle with highest level in the mantle edge and lower level in the mantle pallium.

Its subcellular location is the secreted. The chain is Valine-rich protein from Pinctada maxima (Silver-lipped pearl oyster).